A 539-amino-acid polypeptide reads, in one-letter code: Nucleobase-ascorbate transporter 8 (539 aa).

The disordered stretch occupies residues 1-20 (MAGDGVENAKPPQKQEDLQP). 12 consecutive transmembrane segments (helical) span residues 44–64 (ILLG…IPTM), 79–99 (LIQT…FFGT), 101–121 (LPAV…IVLA), 141–161 (IQGA…SGLW), 167–187 (FLSP…LYEQ), 189–209 (FPML…LVIF), 229–249 (FAVI…TIGG), 295–315 (IFAM…TYIA), 368–388 (VGSR…SILG), 399–421 (APIV…LSLI), 433–453 (FILG…YQYT), and 470–490 (NIIN…AFFL).

This sequence belongs to the nucleobase:cation symporter-2 (NCS2) (TC 2.A.40) family. Highly expressed in ovules, endosperm and embryo.

The protein localises to the cell membrane. The chain is Nucleobase-ascorbate transporter 8 (NAT8) from Arabidopsis thaliana (Mouse-ear cress).